A 736-amino-acid polypeptide reads, in one-letter code: Probable methionine--tRNA ligase, cytoplasmic (736 aa).

The 'HIGH' region signature appears at 25–35 (PYVNNVPHLGN). The 'KMSKS' region motif lies at 346 to 350 (KFSKS). Lysine 349 serves as a coordination point for ATP. The tRNA-binding domain occupies 573-680 (PEFPIDMKIA…QSIEAGSKIA (108 aa)).

It belongs to the class-I aminoacyl-tRNA synthetase family.

The protein resides in the cytoplasm. The catalysed reaction is tRNA(Met) + L-methionine + ATP = L-methionyl-tRNA(Met) + AMP + diphosphate. This chain is Probable methionine--tRNA ligase, cytoplasmic (metS), found in Dictyostelium discoideum (Social amoeba).